Reading from the N-terminus, the 102-residue chain is Large ribosomal subunit protein uL24 (102 aa).

The protein belongs to the universal ribosomal protein uL24 family. As to quaternary structure, part of the 50S ribosomal subunit.

Its function is as follows. One of two assembly initiator proteins, it binds directly to the 5'-end of the 23S rRNA, where it nucleates assembly of the 50S subunit. Functionally, one of the proteins that surrounds the polypeptide exit tunnel on the outside of the subunit. This Polynucleobacter asymbioticus (strain DSM 18221 / CIP 109841 / QLW-P1DMWA-1) (Polynucleobacter necessarius subsp. asymbioticus) protein is Large ribosomal subunit protein uL24.